The primary structure comprises 415 residues: DNA primase DnaG (415 aa).

Residues 171–250 (DAIIIVEGRA…AFSPRGKSVE (80 aa)) enclose the Toprim domain. 3 residues coordinate Mg(2+): E177, D219, and D221. A disordered region spans residues 280-323 (ELPGDLGGRPARTAPAHDEGGNSDTTGKQAVSQKRIRDGTSKVP). Polar residues predominate over residues 301 to 311 (NSDTTGKQAVS).

The protein belongs to the archaeal DnaG primase family. Forms a ternary complex with MCM helicase and DNA. Mg(2+) is required as a cofactor.

It carries out the reaction ssDNA + n NTP = ssDNA/pppN(pN)n-1 hybrid + (n-1) diphosphate.. Functionally, RNA polymerase that catalyzes the synthesis of short RNA molecules used as primers for DNA polymerase during DNA replication. The sequence is that of DNA primase DnaG from Methanoregula boonei (strain DSM 21154 / JCM 14090 / 6A8).